A 320-amino-acid chain; its full sequence is Lipoyl synthase (320 aa).

[4Fe-4S] cluster-binding residues include C67, C72, C78, C93, C97, C100, and S307. The Radical SAM core domain maps to 79-296 (FNHGTATFMI…RTKAEVMGFE (218 aa)).

This sequence belongs to the radical SAM superfamily. Lipoyl synthase family. The cofactor is [4Fe-4S] cluster.

It is found in the cytoplasm. The enzyme catalyses [[Fe-S] cluster scaffold protein carrying a second [4Fe-4S](2+) cluster] + N(6)-octanoyl-L-lysyl-[protein] + 2 oxidized [2Fe-2S]-[ferredoxin] + 2 S-adenosyl-L-methionine + 4 H(+) = [[Fe-S] cluster scaffold protein] + N(6)-[(R)-dihydrolipoyl]-L-lysyl-[protein] + 4 Fe(3+) + 2 hydrogen sulfide + 2 5'-deoxyadenosine + 2 L-methionine + 2 reduced [2Fe-2S]-[ferredoxin]. The protein operates within protein modification; protein lipoylation via endogenous pathway; protein N(6)-(lipoyl)lysine from octanoyl-[acyl-carrier-protein]: step 2/2. Functionally, catalyzes the radical-mediated insertion of two sulfur atoms into the C-6 and C-8 positions of the octanoyl moiety bound to the lipoyl domains of lipoate-dependent enzymes, thereby converting the octanoylated domains into lipoylated derivatives. The polypeptide is Lipoyl synthase (Mannheimia succiniciproducens (strain KCTC 0769BP / MBEL55E)).